The primary structure comprises 3146 residues: Bassianolide nonribosomal cyclodepsipeptide synthetase (3146 aa).

The segment covering 1-12 has biased composition (polar residues); the sequence is MEPPNNANTGQL. Residues 1-23 are disordered; it reads MEPPNNANTGQLGPTLPNGTVDL. Positions 69 to 454 are condensation 1; that stretch reads HVVYEIPEDV…INKLQSTDGS (386 aa). The tract at residues 495-887 is adenylation 1; that stretch reads GDTPNKPAVC…GRMDSQVKIR (393 aa). The Carrier 1 domain occupies 1015–1091; the sequence is PDASAGVTKL…SLQAAIGGSS (77 aa). The residue at position 1052 (serine 1052) is an O-(pantetheine 4'-phosphoryl)serine. The tract at residues 1109 to 1538 is condensation 2; the sequence is SYSQGRLWFL…QTLISVVPLT (430 aa). An adenylation 2 region spans residues 1567–1973; that stretch reads FRTQVASYPD…GRMDFQFKIR (407 aa). The segment at 2041–2181 is S-adenosyl-L-methionine-dependent N-methyltransferase (MT); sequence TYTELDTVSS…FPTRDYLERV (141 aa). Carrier domains are found at residues 2514–2588 and 2614–2688; these read FPLS…RQQL and APTT…EVSQ. O-(pantetheine 4'-phosphoryl)serine occurs at positions 2548 and 2648. The segment at 2734-3138 is condensation 3; the sequence is QDVYLATHLQ…THLMEQVCNT (405 aa).

The protein belongs to the NRP synthetase family.

It catalyses the reaction 4 (R)-2-hydroxy-3-methylbutanoate + 4 L-leucine + 4 S-adenosyl-L-methionine + 8 ATP = bassianolide + 8 AMP + 4 S-adenosyl-L-homocysteine + 8 diphosphate + 8 H(+). In terms of biological role, bassianolide nonribosomal synthetase that mediates the biosynthesis of bassianolide (BSL), a non-ribosomal cyclodepsipeptide that shows insecticidal and cancer cell antiproliferative activity. BSLS first catalyzes the iterative synthesis of an enzyme-bound dipeptidol monomer intermediate from D-2-hydroxyisovalerate and L-leucine before performing the condensation and cyclization of 4 dipeptidol monomers to yield the cyclic tetrameric ester bassianolide. The N-methyltransferase MT domain is responsible for the methylation of the leucine residues of bassianolide. BSLS is flexible with both the amino acid and hydroxyl acid precursors, and produces bassianolide as the major product (containing N-methyl-L-Leu), together with small amounts of beauvericin and its analogs beauvericins A-C (containing N-methyl-L-Phe). This chain is Bassianolide nonribosomal cyclodepsipeptide synthetase, found in Beauveria bassiana (White muscardine disease fungus).